We begin with the raw amino-acid sequence, 366 residues long: Ribosomal RNA large subunit methyltransferase M (366 aa).

S-adenosyl-L-methionine is bound by residues S188, 221–224 (CPGG), D240, D260, and D277. The active-site Proton acceptor is K306.

This sequence belongs to the class I-like SAM-binding methyltransferase superfamily. RNA methyltransferase RlmE family. RlmM subfamily. Monomer.

Its subcellular location is the cytoplasm. The catalysed reaction is cytidine(2498) in 23S rRNA + S-adenosyl-L-methionine = 2'-O-methylcytidine(2498) in 23S rRNA + S-adenosyl-L-homocysteine + H(+). In terms of biological role, catalyzes the 2'-O-methylation at nucleotide C2498 in 23S rRNA. This Salmonella heidelberg (strain SL476) protein is Ribosomal RNA large subunit methyltransferase M.